The primary structure comprises 2871 residues: MSCNGGSHPRINTLGRMIRAESGPDLRYEVTSGGGGTSRMYYSRRGVITDQNSDGYCQTGTMSRHQNQNTIQELLQNCSDCLMRAELIVQPELKYGDGIQLTRSRELDECFAQANDQMEILDSLIREMRQMGQPCDAYQKRLLQLQEQMRALYKAISVPRVRRASSKGGGGYTCQSGSGWDEFTKHVTSECLGWMRQQRAEMDMVAWGVDLASVEQHINSHRGIHNSIGDYRWQLDKIKADLREKSAIYQLEEEYENLLKASFERMDHLRQLQNIIQATSREIMWINDCEEEELLYDWSDKNTNIAQKQEAFSIRMSQLEVKEKELNKLKQESDQLVLNQHPASDKIEAYMDTLQTQWSWILQITKCIDVHLKENAAYFQFFEEAQSTEAYLKGLQDSIRKKYPCDKNMPLQHLLEQIKELEKEREKILEYKRQVQNLVNKSKKIVQLKPRNPDYRSNKPIILRALCDYKQDQKIVHKGDECILKDNNERSKWYVTGPGGVDMLVPSVGLIIPPPNPLAVDLSCKIEQYYEAILALWNQLYINMKSLVSWHYCMIDIEKIRAMTIAKLKTMRQEDYMKTIADLELHYQEFIRNSQGSEMFGDDDKRKIQSQFTDAQKHYQTLVIQLPGYPQHQTVTTTEITHHGTCQDVNHNKVIETNRENDKQETWMLMELQKIRRQIEHCEGRMTLKNLPLADQGSSHHITVKINELKSVQNDSQAIAEVLNQLKDMLANFRGSEKYCYLQNEVFGLFQKLENINGVTDGYLNSLCTVRALLQAILQTEDMLKVYEARLTEEETVCLDLDKVEAYRCGLKKIKNDLNLKKSLLATMKTELQKAQQIHSQTSQQYPLYDLDLGKFGEKVTQLTDRWQRIDKQIDFRLWDLEKQIKQLRNYRDNYQAFCKWLYDAKRRQDSLESMKFGDSNTVMRFLNEQKNLHSEISGKRDKSEEVQKIAELCANSIKDYELQLASYTSGLETLLNIPIKRTMIQSPSGVILQEAADVHARYIELLTRSGDYYRFLSEMLKSLEDLKLKNTKIEVLEEELRLARDANSENCNKNKFLDQNLQKYQAECSQFKAKLASLEELKRQAELDGKSAKQNLDKCYGQIKELNEKITRLTYEIEDEKRRRKSVEDRFDQQKNDYDQLQKARQCEKENLGWQKLESEKAIKEKEYEIERLRVLLQEEGTRKREYENELAKVRNHYNEEMSNLRNKYETEINITKTTIKEISMQKEDDSKNLRNQLDRLSRENRDLKDEIVRLNDSILQATEQRRRAEENALQQKACGSEIMQKKQHLEIELKQVMQQRSEDNARHKQSLEEAAKTIQDKNKEIERLKAEFQEEAKRRWEYENELSKVRNNYDEEIISLKNQFETEINITKTTIHQLTMQKEEDTSGYRAQIDNLTRENRSLSEEIKRLKNTLTQTTENLRRVEEDIQQQKATGSEVSQRKQQLEVELRQVTQMRTEESVRYKQSLDDAAKTIQDKNKEIERLKQLIDKETNDRKCLEDENARLQRVQYDLQKANSSATETINKLKVQEQELTRLRIDYERVSQERTVKDQDITRFQNSLKELQLQKQKVEEELNRLKRTASEDSCKRKKLEEELEGMRRSLKEQAIKITNLTQQLEQASIVKKRSEDDLRQQRDVLDGHLREKQRTQEELRRLSSEVEALRRQLLQEQESVKQAHLRNEHFQKAIEDKSRSLNESKIEIERLQSLTENLTKEHLMLEEELRNLRLEYDDLRRGRSEADSDKNATILELRSQLQISNNRTLELQGLINDLQRERENLRQEIEKFQKQALEASNRIQESKNQCTQVVQERESLLVKIKVLEQDKARLQRLEDELNRAKSTLEAETRVKQRLECEKQQIQNDLNQWKTQYSRKEEAIRKIESEREKSEREKNSLRSEIERLQAEIKRIEERCRRKLEDSTRETQSQLETERSRYQREIDKLRQRPYGSHRETQTECEWTVDTSKLVFDGLRKKVTAMQLYECQLIDKTTLDKLLKGKKSVEEVASEIQPFLRGAGSIAGASASPKEKYSLVEAKRKKLISPESTVMLLEAQAATGGIIDPHRNEKLTVDSAIARDLIDFDDRQQIYAAEKAITGFDDPFSGKTVSVSEAIKKNLIDRETGMRLLEAQIASGGVVDPVNSVFLPKDVALARGLIDRDLYRSLNDPRDSQKNFVDPVTKKKVSYVQLKERCRIEPHTGLLLLSVQKRSMSFQGIRQPVTVTELVDSGILRPSTVNELESGQISYDEVGERIKDFLQGSSCIAGIYNETTKQKLGIYEAMKIGLVRPGTALELLEAQAATGFIVDPVSNLRLPVEEAYKRGLVGIEFKEKLLSAERAVTGYNDPETGNIISLFQAMNKELIEKGHGIRLLEAQIATGGIIDPKESHRLPVDIAYKRGYFNEELSEILSDPSDDTKGFFDPNTEENLTYLQLKERCIKDEETGLCLLPLKEKKKQVQTSQKNTLRKRRVVIVDPETNKEMSVQEAYKKGLIDYETFKELCEQECEWEEITITGSDGSTRVVLVDRKTGSQYDIQDAIDKGLVDRKFFDQYRSGSLSLTQFADMISLKNGVGTSSSMGSGVSDDVFSSSRHESVSKISTISSVRNLTIRSSSFSDTLEESSPIAAIFDTENLEKISITEGIERGIVDSITGQRLLEAQACTGGIIHPTTGQKLSLQDAVSQGVIDQDMATRLKPAQKAFIGFEGVKGKKKMSAAEAVKEKWLPYEAGQRFLEFQYLTGGLVDPEVHGRISTEEAIRKGFIDGRAAQRLQDTSSYAKILTCPKTKLKISYKDAINRSMVEDITGLRLLEAASVSSKGLPSPYNMSSAPGSRSGSRSGSRSGSRSGSRSGSRRGSFDATGNSSYSYSYSFSSSSIGH.

The interval 1-584 is interaction with PKP1, JUP, PKP2; that stretch reads MSCNGGSHPR…DYMKTIADLE (584 aa). Residues 1 to 1056 are globular 1; that stretch reads MSCNGGSHPR…ANSENCNKNK (1056 aa). Phosphoserine is present on residues Ser-22 and Ser-53. Phosphotyrosine is present on Tyr-56. A Phosphothreonine modification is found at Thr-61. Phosphoserine occurs at positions 165, 166, and 176. 2 Spectrin repeats span residues 178–271 and 272–375; these read SGWD…HLRQ and LQNI…LKEN. The stretch at 376–446 is one Spectrin 3a repeat; that stretch reads AAYFQFFEEA…NLVNKSKKIV (71 aa). One can recognise an SH3 domain in the interval 458 to 515; sequence NKPIILRALCDYKQDQKIVHKGDECILKDNNERSKWYVTGPGGVDMLVPSVGLIIPPP. A Spectrin 3b repeat occupies 516-545; that stretch reads NPLAVDLSCKIEQYYEAILALWNQLYINMK. Spectrin repeat units lie at residues 546-627, 654-769, and 770-883; these read SLVS…IQLP, VIET…SLCT, and VRAL…DLEK. A coiled-coil region spans residues 1018–1945; that stretch reads SEMLKSLEDL…QREIDKLRQR (928 aa). A central fibrous rod domain region spans residues 1057 to 1945; the sequence is FLDQNLQKYQ…QREIDKLRQR (889 aa). A phosphoserine mark is found at Ser-1658, Ser-1708, and Ser-2024. Residues 1946–2871 are globular 2; that stretch reads PYGSHRETQT…YSFSSSSIGH (926 aa). The segment at 1960–2208 is 4.5 X 38 AA tandem repeats (Domain A); sequence TVDTSKLVFD…LLLSVQKRSM (249 aa). Plectin repeat units lie at residues 2009-2045, 2046-2083, 2084-2121, 2122-2159, 2163-2197, 2198-2233, 2251-2288, 2289-2326, 2327-2364, 2365-2402, 2406-2440, 2456-2493, 2507-2544, 2610-2647, 2648-2685, 2724-2761, and 2762-2799; these read QPFL…PEST, VMLL…FDDR, QQIY…RETG, MRLL…RDLY, NDPR…PHTG, LLLL…PSTV, KDFL…PGTA, LELL…IEFK, EKLL…KGHG, IRLL…EELS, SDPS…EETG, SQKN…YETF, TITG…RKFF, SDTL…SITG, QRLL…QDMA, QRFL…GRAA, and QRLQ…DITG. Residues Ser-2207, Ser-2209, and Ser-2225 each carry the phosphoserine modification. Residues 2244–2446 are 4.5 X 38 AA tandem repeats (Domain B); that stretch reads DEVGERIKDF…EETGLCLLPL (203 aa). The 4.5 X 38 AA tandem repeats (Domain C) stretch occupies residues 2609-2822; that stretch reads FSDTLEESSP…LPSPYNMSSA (214 aa). A phosphoserine mark is found at Ser-2810 and Ser-2815. Polar residues predominate over residues 2810–2823; it reads SKGLPSPYNMSSAP. The disordered stretch occupies residues 2810–2871; the sequence is SKGLPSPYNM…YSFSSSSIGH (62 aa). The residue at position 2817 (Tyr-2817) is a Phosphotyrosine. Phosphoserine is present on residues Ser-2820, Ser-2821, and Ser-2825. The 6 X 4 AA tandem repeats of G-S-R-[SR] stretch occupies residues 2824–2847; sequence GSRSGSRSGSRSGSRSGSRSGSRR. Residues 2824 to 2847 are compositionally biased toward low complexity; it reads GSRSGSRSGSRSGSRSGSRSGSRR. Omega-N-methylarginine occurs at positions 2826 and 2847. Residue Ser-2849 is modified to Phosphoserine. The residue at position 2853 (Thr-2853) is a Phosphothreonine. Over residues 2856–2871 the composition is skewed to low complexity; the sequence is SSYSYSYSFSSSSIGH. The residue at position 2868 (Ser-2868) is a Phosphoserine.

Belongs to the plakin or cytolinker family. Homodimer. Interacts with COL17A1 (via cytoplasmic region). Interacts with DSC2. Interacts with PKP2. Interacts with PKP1. Interacts weakly with TMEM65. Phosphorylation at Ser-2849 increases association with intermediate filament cytokeratin, potentially facilitating interaction between desmosome junctions and intermediate filament architecture. As to expression, expressed in oral mucosa (at protein level). Expressed in arrector pili muscle (at protein level). Expressed in the heart in the heart (at protein level). Apparently an obligate constituent of all desmosomes. In terms of tissue distribution, resides predominantly in tissues and cells of stratified origin.

The protein resides in the cell junction. It localises to the desmosome. Its subcellular location is the cell membrane. The protein localises to the cytoplasm. In terms of biological role, major high molecular weight protein of desmosomes. Regulates profibrotic gene expression in cardiomyocytes via activation of the MAPK14/p38 MAPK signaling cascade and increase in TGFB1 protein abundance. The sequence is that of Desmoplakin (DSP) from Homo sapiens (Human).